The following is a 534-amino-acid chain: Serine protease vicPb (534 aa).

Positions 1 to 17 (MLRYLLIPILYLQVVLG) are cleaved as a signal peptide. Asn-34, Asn-65, and Asn-126 each carry an N-linked (GlcNAc...) asparagine glycan. Ser-174 (charge relay system) is an active-site residue. N-linked (GlcNAc...) asparagine glycans are attached at residues Asn-297, Asn-335, Asn-352, Asn-415, and Asn-437. Asp-451 (charge relay system) is an active-site residue.

It belongs to the peptidase S28 family.

It functions in the pathway mycotoxin biosynthesis. Its function is as follows. Serine protease, part of the gene cluster that mediates the biosynthesis of the secondary metabolite victorin, the molecular basis for Victoria blight of oats. Within the pathway, vicPa and vicPb are probably involved in the processing of the vicA1 and vicA2 precursors. The pathway starts with the processing of the precursor vicA1 by several endopeptidases including kexin proteases as well as the cluster-specific S28 family peptidases vicPa and vicPb to produce 7 identical copies of the hexapeptide Gly-Leu-Lys-Leu-Ala-Phe. After being excised from the precursor peptide, the core peptides are cyclized and modified post-translationally by enzymes encoded within the gene cluster. The ustYa family oxidase vicYb is required for the formation of the macrocycle in victorin and the copper amine oxidases (CAOs) vicK1 and vicK2 are responsible for converting victorin to the active form by oxidizing the N-terminal glycyl residue in the peptides to glyoxylate. Relaxed substrate specificity of enzymes in the victorin biosynthetic pathway results in a metabolic grid that produces a set of analogs including victorinines B, C, E or HV-toxin M. The protein is Serine protease vicPb of Bipolaris victoriae (strain FI3) (Victoria blight of oats agent).